Here is an 84-residue protein sequence, read N- to C-terminus: Dolichol phosphate-mannose biosynthesis regulatory protein (84 aa).

2 consecutive transmembrane segments (helical) span residues 11–31 (LGLVAVSLIIFTYYTAWVILL) and 49–69 (YAVAIPLAAGLLLLLFVGLFI).

The protein belongs to the DPM2 family. In terms of assembly, component of the dolichol-phosphate mannose (DPM) synthase complex composed of DPM1, DPM2 and DPM3; in the complex interacts directly with DPM3. Component of the glycosylphosphatidylinositol-N-acetylglucosaminyltransferase (GPI-GnT) complex composed at least by PIGA, PIGC, PIGH, PIGP, PIGQ, PIGY and DPM2. Interacts with PIGA, PIGC and PIGQ.

Its subcellular location is the endoplasmic reticulum membrane. It participates in protein modification; protein glycosylation. Its function is as follows. Regulates the biosynthesis of dolichol phosphate-mannose. Regulatory subunit of the dolichol-phosphate mannose (DPM) synthase complex; essential for the ER localization and stable expression of DPM1. Part of the glycosylphosphatidylinositol-N-acetylglucosaminyltransferase (GPI-GnT) complex that catalyzes the transfer of N-acetylglucosamine from UDP-N-acetylglucosamine to phosphatidylinositol and participates in the first step of GPI biosynthesis. May act by regulating the GPI-GNT complex. The protein is Dolichol phosphate-mannose biosynthesis regulatory protein of Homo sapiens (Human).